Reading from the N-terminus, the 205-residue chain is MPGLLGKKIGMTSVFSADGKNVPCTVIEAGPCVVTQVKTVEKDGYAAVQLGFQDKKEKHTTKPLMGHFKKAGVTPKRHLAEFKEFENELNLGDTVTVELFDGADYVDVVGTSKGKGFQGVVKRHGFGGVGQSTHGQHNRARKPGSIGACSYPAKVFKGMRMGGQMGGDRVTVQNLQVLKVIAEHNLLLIKGSVPGCKGSIVLIEK.

This sequence belongs to the universal ribosomal protein uL3 family. In terms of assembly, part of the 50S ribosomal subunit. Forms a cluster with proteins L14 and L19.

Its function is as follows. One of the primary rRNA binding proteins, it binds directly near the 3'-end of the 23S rRNA, where it nucleates assembly of the 50S subunit. This Bacteroides fragilis (strain ATCC 25285 / DSM 2151 / CCUG 4856 / JCM 11019 / LMG 10263 / NCTC 9343 / Onslow / VPI 2553 / EN-2) protein is Large ribosomal subunit protein uL3.